The chain runs to 437 residues: UDP-N-acetylmuramoylalanine--D-glutamate ligase (437 aa).

112-118 (GSNGKST) provides a ligand contact to ATP.

It belongs to the MurCDEF family.

It is found in the cytoplasm. It catalyses the reaction UDP-N-acetyl-alpha-D-muramoyl-L-alanine + D-glutamate + ATP = UDP-N-acetyl-alpha-D-muramoyl-L-alanyl-D-glutamate + ADP + phosphate + H(+). The protein operates within cell wall biogenesis; peptidoglycan biosynthesis. In terms of biological role, cell wall formation. Catalyzes the addition of glutamate to the nucleotide precursor UDP-N-acetylmuramoyl-L-alanine (UMA). The polypeptide is UDP-N-acetylmuramoylalanine--D-glutamate ligase (Haemophilus influenzae (strain 86-028NP)).